A 110-amino-acid polypeptide reads, in one-letter code: Large ribosomal subunit protein uL22 (110 aa).

Belongs to the universal ribosomal protein uL22 family. Part of the 50S ribosomal subunit.

Functionally, this protein binds specifically to 23S rRNA; its binding is stimulated by other ribosomal proteins, e.g. L4, L17, and L20. It is important during the early stages of 50S assembly. It makes multiple contacts with different domains of the 23S rRNA in the assembled 50S subunit and ribosome. Its function is as follows. The globular domain of the protein is located near the polypeptide exit tunnel on the outside of the subunit, while an extended beta-hairpin is found that lines the wall of the exit tunnel in the center of the 70S ribosome. The chain is Large ribosomal subunit protein uL22 from Paraburkholderia phytofirmans (strain DSM 17436 / LMG 22146 / PsJN) (Burkholderia phytofirmans).